The following is a 412-amino-acid chain: MQMITLAQQAKIASVELAQFENVQKNQALLTIAQQLEQRSAEILAANAKDIEFAKNQGISTAIIDRLLLNESRLQGIANDVRNVAKLADPVGQVIDGGVLNSGLKIERQRVPLGVILTIYEARPNVTIDVASLCLKTGNAVILRGGKETKFTNAVLVEVVQQALETAGLPKLAVQAVTDPDRVLLLELLKLDRYIDMVIPRGGAGLHQFCKENSTIPVIVGGIGVCHMFVEKSADQQKTLELIANAKTQRPSTCNTLETLLVEKAIAVEFLPKLANRMKALGVTLHTDDLQKTEGIEPLDEARMRQEWLSLDLNVVVIDNLTKAVEHIREYGSQHSEAILTSDYQLARQFVAQVDAAAVYINASTRFTDGGEFGLGAEVAVSTQKLHARGPMGLEALTTYKWVCEGDYLVRK.

The protein belongs to the gamma-glutamyl phosphate reductase family.

It localises to the cytoplasm. The catalysed reaction is L-glutamate 5-semialdehyde + phosphate + NADP(+) = L-glutamyl 5-phosphate + NADPH + H(+). Its pathway is amino-acid biosynthesis; L-proline biosynthesis; L-glutamate 5-semialdehyde from L-glutamate: step 2/2. Functionally, catalyzes the NADPH-dependent reduction of L-glutamate 5-phosphate into L-glutamate 5-semialdehyde and phosphate. The product spontaneously undergoes cyclization to form 1-pyrroline-5-carboxylate. This chain is Gamma-glutamyl phosphate reductase, found in Actinobacillus pleuropneumoniae serotype 3 (strain JL03).